Reading from the N-terminus, the 545-residue chain is Phenylalanine--tRNA ligase beta subunit (545 aa).

The region spanning 266 to 342 (LSPALRNINV…IGAGFGNLEA (77 aa)) is the B5 domain. Mg(2+) is bound by residues D320, D326, E329, and D330.

The protein belongs to the phenylalanyl-tRNA synthetase beta subunit family. Type 2 subfamily. In terms of assembly, tetramer of two alpha and two beta subunits. Requires Mg(2+) as cofactor.

It is found in the cytoplasm. It carries out the reaction tRNA(Phe) + L-phenylalanine + ATP = L-phenylalanyl-tRNA(Phe) + AMP + diphosphate + H(+). This Methanospirillum hungatei JF-1 (strain ATCC 27890 / DSM 864 / NBRC 100397 / JF-1) protein is Phenylalanine--tRNA ligase beta subunit.